The chain runs to 274 residues: MAAATSTMSLIPPITQQQRWHAADSLVVLASRRHDSRRRRRCRYVVPRARLFGPAIFEASKLKVLFLGVDEEKHQHPGKLPRTYTLTHSDVTARLTLAVSHTINRAQLQGWYNKLQRDEVVAEWKKVQGHMSLHVHCHISGGHVLLDLIAGLRYYIFRKELPVVLKAFVHGDGNLFSRHPELEEATVWVYFHSNLPRFNRVECWGPLRDAGAPPEEDDAVAAAAAEEVAAEQMPAAGEWPRRCPGQCDCCFPPYSLIPWPHQHDVAAADGQPQQ.

The transit peptide at 1–48 (MAAATSTMSLIPPITQQQRWHAADSLVVLASRRHDSRRRRRCRYVVPR) directs the protein to the chloroplast.

It belongs to the staygreen family.

It is found in the plastid. The protein localises to the chloroplast. In terms of biological role, involved in the disassembling mechanism of the intact light-harvesting complex of photosystem II (LHCPII) in the thylakoid membranes. Required to trigger chlorophyll degradation during natural and dark-induced leaf senescence. The chain is Protein STAY-GREEN, chloroplastic (SGR) from Oryza sativa subsp. indica (Rice).